We begin with the raw amino-acid sequence, 106 residues long: UPF0145 protein NE1032 (106 aa).

It belongs to the UPF0145 family.

In Nitrosomonas europaea (strain ATCC 19718 / CIP 103999 / KCTC 2705 / NBRC 14298), this protein is UPF0145 protein NE1032.